The following is a 567-amino-acid chain: MFS-type transporter poxA (567 aa).

Basic and acidic residues predominate over residues 1–23 (MPASDRTSETGDVEKVTAAETPK). The interval 1 to 24 (MPASDRTSETGDVEKVTAAETPKE) is disordered. 10 helical membrane-spanning segments follow: residues 35 to 55 (ALTG…LFLG), 77 to 97 (ADIG…QLLA), 108 to 128 (LVFL…GVAV), 141 to 161 (GAGA…VVPL), 165 to 185 (SLIL…GPVI), 197 to 217 (WCFY…ILFF), 240 to 260 (LAGC…LQWG), 271 to 291 (SATI…FLIW), 311 to 331 (IIAS…VGYF), and 349 to 369 (VMLL…GVIV). Asparagine 370 is a glycosylation site (N-linked (GlcNAc...) asparagine). Transmembrane regions (helical) follow at residues 372–392 (TGYF…GSGL), 410–430 (ILQG…QVAL), 436–456 (LIPV…SIML), and 515–535 (AIAG…LVSF). Residues 547–567 (EENKKEAAEEEEEVKVAAVEA) are disordered.

This sequence belongs to the major facilitator superfamily. TCR/Tet family.

Its subcellular location is the cell membrane. MFS-type transporter; part of the gene cluster that mediates the biosynthesis of oxaleimides, cytotoxic compounds containing an unusual disubstituted succinimide moiety. This Penicillium oxalicum (strain 114-2 / CGMCC 5302) (Penicillium decumbens) protein is MFS-type transporter poxA.